Reading from the N-terminus, the 56-residue chain is Conotoxin Cal6.41a (56 aa).

A signal peptide spans 1–23 (MSGSGAMLLGLLILVAMATSLDT). 3 disulfide bridges follow: Cys-27–Cys-41, Cys-33–Cys-50, and Cys-40–Cys-54.

As to expression, expressed by the venom duct.

It is found in the secreted. Functionally, probable neurotoxin. The sequence is that of Conotoxin Cal6.41a from Californiconus californicus (California cone).